The following is a 210-amino-acid chain: Proteasome subunit beta 2 (210 aa).

The propeptide at M1–G12 is removed in mature form; by autocatalysis. The active-site Nucleophile is the T13.

It belongs to the peptidase T1B family. As to quaternary structure, the 20S proteasome core is composed of 14 alpha and 14 beta subunits that assemble into four stacked heptameric rings, resulting in a barrel-shaped structure. The two inner rings, each composed of seven catalytic beta subunits, are sandwiched by two outer rings, each composed of seven alpha subunits. The catalytic chamber with the active sites is on the inside of the barrel. Has a gated structure, the ends of the cylinder being occluded by the N-termini of the alpha-subunits. Is capped at one or both ends by the proteasome regulatory ATPase, PAN.

Its subcellular location is the cytoplasm. It catalyses the reaction Cleavage of peptide bonds with very broad specificity.. Its activity is regulated as follows. The formation of the proteasomal ATPase PAN-20S proteasome complex, via the docking of the C-termini of PAN into the intersubunit pockets in the alpha-rings, triggers opening of the gate for substrate entry. Interconversion between the open-gate and close-gate conformations leads to a dynamic regulation of the 20S proteasome proteolysis activity. In terms of biological role, component of the proteasome core, a large protease complex with broad specificity involved in protein degradation. The chain is Proteasome subunit beta 2 from Cenarchaeum symbiosum (strain A).